The primary structure comprises 1317 residues: Clustered mitochondria protein homolog (1317 aa).

Residues 382–626 (DITRSQESYL…RVTPLDVTWQ (245 aa)) form the Clu domain. Positions 669–689 (KAQEEAANKEQSSEVTESKEQ) are enriched in basic and acidic residues. 2 disordered regions span residues 669–700 (KAQE…EALD) and 939–966 (ANGV…PSRA). TPR repeat units follow at residues 1040-1073 (AKLY…TERT), 1082-1115 (ILAY…WKII), and 1124-1157 (ITTM…CESL). 2 disordered regions span residues 1252–1273 (VQPQ…ANAS) and 1288–1317 (GGDA…KSSA).

The protein belongs to the CLU family. As to quaternary structure, may associate with the eukaryotic translation initiation factor 3 (eIF-3) complex.

The protein localises to the cytoplasm. Functionally, mRNA-binding protein involved in proper cytoplasmic distribution of mitochondria. This chain is Clustered mitochondria protein homolog, found in Neosartorya fischeri (strain ATCC 1020 / DSM 3700 / CBS 544.65 / FGSC A1164 / JCM 1740 / NRRL 181 / WB 181) (Aspergillus fischerianus).